The following is a 223-amino-acid chain: Urease accessory protein UreG (223 aa).

A disordered region spans residues 1–30 (MAKHSHDHTHDHHDRPRRVRKPGEPLRIGV). 32–39 (GPVGSGKT) contributes to the GTP binding site.

It belongs to the SIMIBI class G3E GTPase family. UreG subfamily. Homodimer. UreD, UreF and UreG form a complex that acts as a GTP-hydrolysis-dependent molecular chaperone, activating the urease apoprotein by helping to assemble the nickel containing metallocenter of UreC. The UreE protein probably delivers the nickel.

It is found in the cytoplasm. In terms of biological role, facilitates the functional incorporation of the urease nickel metallocenter. This process requires GTP hydrolysis, probably effectuated by UreG. The chain is Urease accessory protein UreG from Mycobacterium ulcerans (strain Agy99).